The following is a 793-amino-acid chain: Outer membrane protein assembly factor BamA (793 aa).

A signal peptide spans 1-19; that stretch reads MKKLLIASLLFGTTTTVFA. POTRA domains lie at 22–89, 90–170, 173–259, 262–341, and 344–418; these read FVAK…VVAK, SIIS…INED, AKLA…VNEG, YDLR…VDAG, and LTVR…VKER.

The protein belongs to the BamA family. As to quaternary structure, part of the Bam complex.

It localises to the cell outer membrane. Part of the outer membrane protein assembly complex, which is involved in assembly and insertion of beta-barrel proteins into the outer membrane. The chain is Outer membrane protein assembly factor BamA from Haemophilus influenzae.